The following is a 317-amino-acid chain: Carbonic anhydrase 5B, mitochondrial (317 aa).

The transit peptide at 1-33 (MAVMNHLRVILQVSSSTLPWRRCWVPRLVPRRS) directs the protein to the mitochondrion. One can recognise an Alpha-carbonic anhydrase domain in the interval 37 to 296 (YTCTYRTRNR…LMNRTVRSSF (260 aa)). Residues H130, H132, and H155 each contribute to the Zn(2+) site. Substrate is bound at residue 235-236 (TT).

The protein belongs to the alpha-carbonic anhydrase family. The cofactor is Zn(2+). As to expression, expressed in the heart, liver, lung, kidney, testis, and skeletal muscle (at protein level).

The protein localises to the mitochondrion. It catalyses the reaction hydrogencarbonate + H(+) = CO2 + H2O. Its function is as follows. Mitochondrial carbonic anhydrase that catalyzes the reversible conversion of carbon dioxide to bicarbonate/HCO3. This is Carbonic anhydrase 5B, mitochondrial (Ca5b) from Mus musculus (Mouse).